We begin with the raw amino-acid sequence, 154 residues long: Transcription antitermination protein NusB (154 aa).

Belongs to the NusB family.

Involved in transcription antitermination. Required for transcription of ribosomal RNA (rRNA) genes. Binds specifically to the boxA antiterminator sequence of the ribosomal RNA (rrn) operons. The chain is Transcription antitermination protein NusB from Desulfosudis oleivorans (strain DSM 6200 / JCM 39069 / Hxd3) (Desulfococcus oleovorans).